Consider the following 87-residue polypeptide: Homeotic protein ultrabithorax (87 aa).

An Antp-type hexapeptide motif is present at residues 22-27 (FYPWMA).

It belongs to the Antp homeobox family. As to expression, in the embryo, expression is seen in the epidermis, somatic and visceral mesoderm, and the peripheral and central nervous system.

It is found in the nucleus. Functionally, sequence-specific transcription factor which is part of a developmental regulatory system that provides cells with specific positional identities on the anterior-posterior axis. Binds the consensus region 5'-TTAAT[GT][GA]-3'. This homeotic protein controls development of the cells in the posterior thoracic and first abdominal segments. It activates the synthesis of the decapentaplegic (DPP) growth factor. The chain is Homeotic protein ultrabithorax (Ubx) from Drosophila hydei (Fruit fly).